The primary structure comprises 184 residues: Large ribosomal subunit protein uL18 (184 aa).

This sequence belongs to the universal ribosomal protein uL18 family. As to quaternary structure, part of the 50S ribosomal subunit. Contacts the 5S and 23S rRNAs.

Its function is as follows. This is one of the proteins that bind and probably mediate the attachment of the 5S RNA into the large ribosomal subunit, where it forms part of the central protuberance. In Haloferax mediterranei (strain ATCC 33500 / DSM 1411 / JCM 8866 / NBRC 14739 / NCIMB 2177 / R-4) (Halobacterium mediterranei), this protein is Large ribosomal subunit protein uL18.